A 446-amino-acid polypeptide reads, in one-letter code: 23S rRNA (uracil(1939)-C(5))-methyltransferase RlmD (446 aa).

The TRAM domain occupies 6-64; that stretch reads KKLPQESITCEIESLSHEGRGVSHKDGKTLFVEGALPGETVTARYVNSRRSYDELAVEE. Residues cysteine 77, cysteine 83, cysteine 86, and cysteine 165 each contribute to the [4Fe-4S] cluster site. S-adenosyl-L-methionine-binding residues include glutamine 275, phenylalanine 304, asparagine 309, glutamate 325, aspartate 352, and aspartate 377. The active-site Nucleophile is cysteine 403.

This sequence belongs to the class I-like SAM-binding methyltransferase superfamily. RNA M5U methyltransferase family. RlmD subfamily.

The catalysed reaction is uridine(1939) in 23S rRNA + S-adenosyl-L-methionine = 5-methyluridine(1939) in 23S rRNA + S-adenosyl-L-homocysteine + H(+). Functionally, catalyzes the formation of 5-methyl-uridine at position 1939 (m5U1939) in 23S rRNA. This chain is 23S rRNA (uracil(1939)-C(5))-methyltransferase RlmD, found in Hahella chejuensis (strain KCTC 2396).